A 360-amino-acid polypeptide reads, in one-letter code: Endolytic peptidoglycan transglycosylase RlpA (360 aa).

Residues 1–17 (MRKEWLWVGIASVLLSA) form the signal peptide. Cys18 is lipidated: N-palmitoyl cysteine. Cys18 carries S-diacylglycerol cysteine lipidation. The SPOR domain maps to 283–359 (SAISGGYVVQ…AQQQSFIVAA (77 aa)).

This sequence belongs to the RlpA family.

It is found in the cell membrane. In terms of biological role, lytic transglycosylase with a strong preference for naked glycan strands that lack stem peptides. This chain is Endolytic peptidoglycan transglycosylase RlpA, found in Yersinia pestis.